The following is a 291-amino-acid chain: tRNA dimethylallyltransferase (291 aa).

Residue 11–18 (GPTASGKS) participates in ATP binding. 13–18 (TASGKS) contributes to the substrate binding site. Residues 42–45 (DSMQ) are interaction with substrate tRNA.

The protein belongs to the IPP transferase family. Monomer. Mg(2+) serves as cofactor.

It catalyses the reaction adenosine(37) in tRNA + dimethylallyl diphosphate = N(6)-dimethylallyladenosine(37) in tRNA + diphosphate. In terms of biological role, catalyzes the transfer of a dimethylallyl group onto the adenine at position 37 in tRNAs that read codons beginning with uridine, leading to the formation of N6-(dimethylallyl)adenosine (i(6)A). The chain is tRNA dimethylallyltransferase from Rubrobacter xylanophilus (strain DSM 9941 / JCM 11954 / NBRC 16129 / PRD-1).